Reading from the N-terminus, the 201-residue chain is Large ribosomal subunit protein uL4 (201 aa).

Residues 44 to 71 (RAQKTRAEVTGSGKKPWRQKGTGRARSG) are disordered.

This sequence belongs to the universal ribosomal protein uL4 family. Part of the 50S ribosomal subunit.

One of the primary rRNA binding proteins, this protein initially binds near the 5'-end of the 23S rRNA. It is important during the early stages of 50S assembly. It makes multiple contacts with different domains of the 23S rRNA in the assembled 50S subunit and ribosome. Its function is as follows. Forms part of the polypeptide exit tunnel. This is Large ribosomal subunit protein uL4 from Escherichia fergusonii (strain ATCC 35469 / DSM 13698 / CCUG 18766 / IAM 14443 / JCM 21226 / LMG 7866 / NBRC 102419 / NCTC 12128 / CDC 0568-73).